The sequence spans 1507 residues: DNA-directed RNA polymerase subunit beta' (1507 aa).

Zn(2+) is bound by residues cysteine 71, cysteine 73, cysteine 86, and cysteine 89. 3 residues coordinate Mg(2+): aspartate 470, aspartate 472, and aspartate 474. Zn(2+) contacts are provided by cysteine 800, cysteine 874, cysteine 881, and cysteine 884.

This sequence belongs to the RNA polymerase beta' chain family. As to quaternary structure, the RNAP catalytic core consists of 2 alpha, 1 beta, 1 beta' and 1 omega subunit. When a sigma factor is associated with the core the holoenzyme is formed, which can initiate transcription. Mg(2+) serves as cofactor. It depends on Zn(2+) as a cofactor.

It carries out the reaction RNA(n) + a ribonucleoside 5'-triphosphate = RNA(n+1) + diphosphate. In terms of biological role, DNA-dependent RNA polymerase catalyzes the transcription of DNA into RNA using the four ribonucleoside triphosphates as substrates. The chain is DNA-directed RNA polymerase subunit beta' from Nitratiruptor sp. (strain SB155-2).